The primary structure comprises 156 residues: Small ribosomal subunit protein uS7c (156 aa).

The protein belongs to the universal ribosomal protein uS7 family. In terms of assembly, part of the 30S ribosomal subunit.

Its subcellular location is the plastid. The protein resides in the chloroplast. One of the primary rRNA binding proteins, it binds directly to 16S rRNA where it nucleates assembly of the head domain of the 30S subunit. This is Small ribosomal subunit protein uS7c (rps7) from Guillardia theta (Cryptophyte).